Reading from the N-terminus, the 1211-residue chain is Periplasmic acid trehalase ATC1 (1211 aa).

Residues 1-46 lie on the Cytoplasmic side of the membrane; that stretch reads MKRIRSLWFNAEASYSNLNNSPSLRNKNSTGNNSRSKNYRSFSRFD. Residues 47 to 67 form a helical membrane-spanning segment; it reads LINSILLLMMLFLLAIFVTAL. Residues 68-1211 are Periplasmic-facing; that stretch reads YLTKSSRLTY…ATIKEIVLND (1144 aa). The interval 70–131 is required for cell surface targeting; sequence TKSSRLTYSH…NTAYYDDENM (62 aa). N-linked (GlcNAc...) asparagine glycosylation is found at asparagine 98, asparagine 207, asparagine 238, asparagine 247, asparagine 255, asparagine 259, asparagine 325, asparagine 370, asparagine 376, and asparagine 488. 513–514 provides a ligand contact to substrate; that stretch reads WD. N-linked (GlcNAc...) asparagine glycosylation is found at asparagine 539, asparagine 568, asparagine 628, and asparagine 638. The Proton donor role is filled by glutamate 644. Residues asparagine 696 and asparagine 705 are each glycosylated (N-linked (GlcNAc...) asparagine). 711 to 712 is a binding site for substrate; the sequence is KQ. Asparagine 879, asparagine 897, asparagine 910, asparagine 972, asparagine 990, asparagine 1031, asparagine 1049, asparagine 1064, asparagine 1147, and asparagine 1157 each carry an N-linked (GlcNAc...) asparagine glycan.

Belongs to the glycosyl hydrolase 65 family. Post-translationally, glycosylated.

It is found in the membrane. Its subcellular location is the vacuole lumen. It localises to the periplasm. It catalyses the reaction alpha,alpha-trehalose + H2O = alpha-D-glucose + beta-D-glucose. In terms of biological role, periplasmic acid trehalase that catalyzes hydrolysis of the disaccharide trehalose and required for growth on trehalose as carbon source. Growth on trehalose is strictly respiratory. The chain is Periplasmic acid trehalase ATC1 from Saccharomyces cerevisiae (strain CEN.PK113-7D) (Baker's yeast).